Reading from the N-terminus, the 78-residue chain is Acyl carrier protein (78 aa).

The region spanning 2–77 (SDIEQRVKQA…SAIDYVTKKL (76 aa)) is the Carrier domain. Serine 37 bears the O-(pantetheine 4'-phosphoryl)serine mark.

It belongs to the acyl carrier protein (ACP) family. In terms of processing, 4'-phosphopantetheine is transferred from CoA to a specific serine of apo-ACP by AcpS. This modification is essential for activity because fatty acids are bound in thioester linkage to the sulfhydryl of the prosthetic group.

The protein resides in the cytoplasm. The protein operates within lipid metabolism; fatty acid biosynthesis. Its function is as follows. Carrier of the growing fatty acid chain in fatty acid biosynthesis. The polypeptide is Acyl carrier protein (Acinetobacter baylyi (strain ATCC 33305 / BD413 / ADP1)).